An 839-amino-acid polypeptide reads, in one-letter code: MPIVLVRPTNRTRRLDSTGAGMGPSSHQQQESPLPTITHCAGCTTAWSPCSFNSSDMETPLQFQRGFFPEQPPPPPRSSHLHCQQQQQSQDKPCAPFAPLPHPHHHPHLAHQQPGSGGSSPCLRCNSCASSGAPAAGAGAGDNLSLLLRTSSPGGAFRTRTSSPLSGSSCCCCCSSRRGSQLNVSELTPSSHASALRQQYAQQPASASQYHQCHSLQPATSPTGSLGSLGSGPPLSHHHHHPHPAHHQHHQPQARRESNPFTEIAMSSCRYNGGVMRPLSNLSSSRRNLQEMDSEAQPLQPPASVVGGGGGASSPSAAAAASSSAPEIVVSKPEHNNSNNLALYGTGGGGSTGGGGGGSGHGSSSGTKSSKKKNQNIGYKLGHRRALFEKRKRLSDYALIFGMFGIVVMVIETELSWGAYDKASLYSLALKCLISLSTIILLGLIIVYHAREIQLFMVDNGADDWRIAMTYERIFFICLEILVCAIHPIPGNYTFTWTARLAFSYAPSTTTADVDIILSIPMFLRLYLIARVMLLHSKLFTDASSRSIGALNKINFNTRFVMKTLMTICPGTVLLVFSISLWIIAAWTVRACERYHDQQDVTSNFLGAMWLISITFLSIGYGDMVPNTYCGKGVCLLTGIMGAGCTALVVAVVARKLELTKAEKHVHNFMMDTQLTKRVKNAAANVLRETWLIYKNTKLVKKIDHAKVRKHQRKFLQAIHQLRSVKMEQRKLNDQANTLVDLAKTQNIMYDMISDLNERSEDFEKRIVTLETKLETLIGSIHALPGLISQTIRQQQRDFIETQMENYDKHVSYNAERSRSSSRRRRSSSTAPPTSSESS.

4 disordered regions span residues 1–33 (MPIV…QESP), 64–115 (QRGF…QQPG), 195–258 (ALRQ…RRES), and 280–375 (SNLS…KKNQ). Composition is skewed to low complexity over residues 198-212 (QQYA…QYHQ) and 219-235 (ATSP…GPPL). Positions 236 to 253 (SHHHHHPHPAHHQHHQPQ) are enriched in basic residues. A compositionally biased stretch (low complexity) spans 313-326 (SSPSAAAAASSSAP). Over residues 345–363 (GTGGGGSTGGGGGGSGHGS) the composition is skewed to gly residues. A helical membrane pass occupies residues 398-418 (ALIFGMFGIVVMVIETELSWG). A Phosphotyrosine modification is found at Y420. A helical membrane pass occupies residues 428–448 (LALKCLISLSTIILLGLIIVY). A helical transmembrane segment spans residues 474-494 (IFFICLEILVCAIHPIPGNYT). Residues 516–536 (IILSIPMFLRLYLIARVMLLH) form a helical membrane-spanning segment. A helical transmembrane segment spans residues 565 to 585 (LMTICPGTVLLVFSISLWIIA). Positions 605–625 (FLGAMWLISITFLSIGYGDMV) form an intramembrane region, pore-forming. Residues 634–654 (VCLLTGIMGAGCTALVVAVVA) form a helical membrane-spanning segment. A calmodulin-binding region spans residues 672–748 (DTQLTKRVKN…LVDLAKTQNI (77 aa)). Residues 810 to 819 (HVSYNAERSR) show a composition bias toward basic and acidic residues. The tract at residues 810–839 (HVSYNAERSRSSSRRRRSSSTAPPTSSESS) is disordered. Positions 828–839 (SSTAPPTSSESS) are enriched in low complexity.

Belongs to the potassium channel KCNN family. KCa2.2/KCNN2 subfamily. As to quaternary structure, homodimer. Heteromultimer with KCNN1 and KCNN3. The complex is composed of 4 channel subunits each of which binds to a calmodulin subunit which regulates the channel activity through calcium-binding. Interacts (via N-terminal domain) with MPP2. Expressed in atrial and ventricular myocytes with higher levels in atrial myocytes (at protein level). Highly expressed in brain, liver and colon with low levels in kidney and testis. In colon, detected in smooth muscle cells.

The protein localises to the membrane. Its subcellular location is the cytoplasm. It is found in the myofibril. The protein resides in the sarcomere. It localises to the z line. The catalysed reaction is K(+)(in) = K(+)(out). Inhibited by bee venom neurotoxin apamin. Inhibited by UCL 1684 and tetraethylammonium (TEA). In terms of biological role, small conductance calcium-activated potassium channel that mediates the voltage-independent transmembrane transfer of potassium across the cell membrane through a constitutive interaction with calmodulin which binds the intracellular calcium allowing its opening. The current is characterized by a voltage-independent activation, an intracellular calcium concentration increase-dependent activation and a single-channel conductance of about 3 picosiemens. Also presents an inwardly rectifying current, thus reducing its already small outward conductance of potassium ions, which is particularly the case when the membrane potential displays positive values, above + 20 mV. The inward rectification could be due to a blockade of the outward current by intracellular divalent cations such as calcium and magnesium and could also be due to an intrinsic property of the channel pore, independent of intracellular divalent ions. There are three positively charged amino acids in the S6 transmembrane domain, close to the pore, that collectively control the conductance and rectification through an electrostatic mechanism. Additionally, electrostatic contributions from these residues also play an important role in determining the intrinsic open probability of the channel in the absence of calcium, affecting the apparent calcium affinity for activation. Forms an heteromeric complex with calmodulin, which is constitutively associated in a calcium-independent manner. Channel opening is triggered when calcium binds the calmodulin resulting in a rotary movement leading to the formation of the dimeric complex to open the gate. Plays a role in the repolarization phase of cardiac action potential. The chain is Small conductance calcium-activated potassium channel protein 2 from Mus musculus (Mouse).